The primary structure comprises 127 residues: Large ribosomal subunit protein bL12 (127 aa).

The tract at residues 101–127 is disordered; sequence VKTGVSKEEAEDAKKQLVESGAEVEIK. Over residues 105-117 the composition is skewed to basic and acidic residues; sequence VSKEEAEDAKKQL.

This sequence belongs to the bacterial ribosomal protein bL12 family. Homodimer. Part of the ribosomal stalk of the 50S ribosomal subunit. Forms a multimeric L10(L12)X complex, where L10 forms an elongated spine to which 2 to 4 L12 dimers bind in a sequential fashion. Binds GTP-bound translation factors.

Its function is as follows. Forms part of the ribosomal stalk which helps the ribosome interact with GTP-bound translation factors. Is thus essential for accurate translation. This is Large ribosomal subunit protein bL12 from Geobacter metallireducens (strain ATCC 53774 / DSM 7210 / GS-15).